A 111-amino-acid polypeptide reads, in one-letter code: COX assembly mitochondrial protein (111 aa).

The 44-residue stretch at 39 to 82 (YKKCANFVQAMADCAKANGMKVFPTCDKQRDEMKSCLLFYQTDE) folds into the CHCH domain. 2 consecutive short sequence motifs (cx9C motif) follow at residues 42–52 (CANFVQAMADC) and 64–74 (CDKQRDEMKSC). 2 disulfides stabilise this stretch: cysteine 42–cysteine 74 and cysteine 52–cysteine 64.

The protein belongs to the CMC family.

It localises to the mitochondrion inner membrane. Its function is as follows. Required for mitochondrial cytochrome c oxidase (COX) assembly and respiration. Binds copper. May be involved in copper trafficking and distribution to mitochondrial COX and SOD1. This Saccharomyces cerevisiae (strain RM11-1a) (Baker's yeast) protein is COX assembly mitochondrial protein (CMC1).